Reading from the N-terminus, the 178-residue chain is Interleukin-10 (178 aa).

The first 18 residues, 1-18, serve as a signal peptide directing secretion; it reads MPNPVLLYCLVLLAGMGT. 2 disulfide bridges follow: C30–C126 and C80–C132. N-linked (GlcNAc...) asparagine glycosylation occurs at N134.

It belongs to the IL-10 family. Homodimer. Interacts with IL10RA and IL10RB.

Its subcellular location is the secreted. In terms of biological role, major immune regulatory cytokine that acts on many cells of the immune system where it has profound anti-inflammatory functions, limiting excessive tissue disruption caused by inflammation. Mechanistically, IL10 binds to its heterotetrameric receptor comprising IL10RA and IL10RB leading to JAK1 and STAT2-mediated phosphorylation of STAT3. In turn, STAT3 translocates to the nucleus where it drives expression of anti-inflammatory mediators. Targets antigen-presenting cells (APCs) such as macrophages and monocytes and inhibits their release of pro-inflammatory cytokines including granulocyte-macrophage colony-stimulating factor /GM-CSF, granulocyte colony-stimulating factor/G-CSF, IL-1 alpha, IL-1 beta, IL-6, IL-8 and TNF-alpha. Also interferes with antigen presentation by reducing the expression of MHC-class II and co-stimulatory molecules, thereby inhibiting their ability to induce T cell activation. In addition, controls the inflammatory response of macrophages by reprogramming essential metabolic pathways including mTOR signaling. This chain is Interleukin-10 (IL10), found in Marmota monax (Woodchuck).